Here is a 470-residue protein sequence, read N- to C-terminus: 6-phospho-beta-glucosidase BglB (470 aa).

Glu172 acts as the Proton donor in catalysis. Residue Glu361 is the Nucleophile of the active site.

Belongs to the glycosyl hydrolase 1 family.

The catalysed reaction is 6-phospho-beta-D-glucosyl-(1-&gt;4)-D-glucose + H2O = D-glucose 6-phosphate + D-glucose. Functionally, catalyzes the hydrolysis of phosphorylated beta-glucosides into glucose-6-phosphate (G-6-P) and aglycone. It has a high affinity for phosphorylated aromatic beta-glucosides (p-nitrophenyl-beta-glucoside, phenyl beta-glucoside, arbutin and phosphorylated salicin), and a low affinity for phosphorylated beta-methyl-glucoside. In Escherichia coli (strain K12), this protein is 6-phospho-beta-glucosidase BglB (bglB).